The primary structure comprises 247 residues: 3-deoxy-manno-octulosonate cytidylyltransferase (247 aa).

It belongs to the KdsB family.

Its subcellular location is the cytoplasm. The enzyme catalyses 3-deoxy-alpha-D-manno-oct-2-ulosonate + CTP = CMP-3-deoxy-beta-D-manno-octulosonate + diphosphate. Its pathway is nucleotide-sugar biosynthesis; CMP-3-deoxy-D-manno-octulosonate biosynthesis; CMP-3-deoxy-D-manno-octulosonate from 3-deoxy-D-manno-octulosonate and CTP: step 1/1. It functions in the pathway bacterial outer membrane biogenesis; lipopolysaccharide biosynthesis. In terms of biological role, activates KDO (a required 8-carbon sugar) for incorporation into bacterial lipopolysaccharide in Gram-negative bacteria. The polypeptide is 3-deoxy-manno-octulosonate cytidylyltransferase (Methylobacterium nodulans (strain LMG 21967 / CNCM I-2342 / ORS 2060)).